The chain runs to 746 residues: Iron-sulfur clusters transporter ABCB7, mitochondrial (746 aa).

The N-terminal 19 residues, 1–19, are a transit peptide targeting the mitochondrion; that stretch reads MAPMLVSLNCGIRVQRRTL. The Mitochondrial matrix portion of the chain corresponds to 20–133; it reads TLLIRQTSSY…KDRPDLRARV (114 aa). The ABC transmembrane type-1 domain maps to 133-429; sequence VAVSLGLLAG…LGTVYRETRQ (297 aa). Residues 134–154 form a helical membrane-spanning segment; sequence AVSLGLLAGAKLTNVMVPFMF. Residues 155-176 lie on the Mitochondrial intermembrane side of the membrane; the sequence is KYAVDELNQMSGHMLNLNDAPS. Residues 177 to 199 form a helical membrane-spanning segment; the sequence is TVATMTTAVLIGYGVSRAGSALF. Residues 200–252 are Mitochondrial matrix-facing; the sequence is NELRNTVFGKVAQSSIRRIAKNVFLHLHNLDLGFHLSRQTGALSKAIDRGTRG. The chain crosses the membrane as a helical span at residues 253 to 273; that stretch reads ISFVLSALVFNLGPTVFEMFL. Residues 274–283 are Mitochondrial intermembrane-facing; the sequence is VSAILYYKCG. Residues 284-304 form a helical membrane-spanning segment; the sequence is GEFAAVALGTLSAYTIFTILV. At 305 to 375 the chain is on the mitochondrial matrix side; it reads TQWRTRFRIE…TLAMLNFGQS (71 aa). Glutathione-binding positions include 308 to 312 and 371 to 374; these read RTRFR and NFGQ. A helical transmembrane segment spans residues 376–396; sequence AIFSVGLTAIMLLASKGIAAG. Over 397–402 the chain is Mitochondrial intermembrane; it reads NMTVGD. Residues 403–423 traverse the membrane as a helical segment; it reads LVMVNGLLFQLSLPLNFLGTV. Gly421 is a binding site for glutathione. Topologically, residues 424–746 are mitochondrial matrix; it reads YRETRQALID…SVKGCGNCSC (323 aa). One can recognise an ABC transporter domain in the interval 465-699; it reads IRFEDVYFEY…PGSLYAELWN (235 aa). ATP is bound by residues Tyr474 and 498–505; that span reads GGSGSGKS. A disordered region spans residues 708–728; that stretch reads SRKSSSAPAAERLSQKEEERK.

Belongs to the ABC transporter superfamily. ABCB family. Heavy Metal importer (TC 3.A.1.210) subfamily. Homodimer.

It localises to the mitochondrion inner membrane. The protein resides in the mitochondrion. It catalyses the reaction (glutathione)4[2Fe(III)-2S] cluster(in) + ATP + H2O = (glutathione)4[2Fe(III)-2S] cluster(out) + ADP + phosphate + H(+). Functionally, exports glutathione-coordinated iron-sulfur clusters such as [2Fe-2S]-(GS)4 cluster from the mitochondria to the cytosol in an ATP-dependent manner allowing the assembly of the cytosolic iron-sulfur (Fe/S) cluster-containing proteins and participates in iron homeostasis. May play a role in iron and lipid metabolism. The chain is Iron-sulfur clusters transporter ABCB7, mitochondrial from Oryzias latipes (Japanese rice fish).